The sequence spans 208 residues: Outer-membrane lipoprotein carrier protein (208 aa).

An N-terminal signal peptide occupies residues 1-22 (MKKRLCAVLLASPLLFSAAVFA).

The protein belongs to the LolA family. As to quaternary structure, monomer.

The protein localises to the periplasm. Its function is as follows. Participates in the translocation of lipoproteins from the inner membrane to the outer membrane. Only forms a complex with a lipoprotein if the residue after the N-terminal Cys is not an aspartate (The Asp acts as a targeting signal to indicate that the lipoprotein should stay in the inner membrane). This is Outer-membrane lipoprotein carrier protein from Shewanella baltica (strain OS195).